The sequence spans 153 residues: Pheromone-binding protein Gp-9 (153 aa).

The first 19 residues, 1–19, serve as a signal peptide directing secretion; that stretch reads MKTFVLHIFIFALVAFASA. Disulfide bonds link cysteine 37-cysteine 77, cysteine 73-cysteine 129, and cysteine 118-cysteine 138.

The protein belongs to the PBP/GOBP family. Homodimer.

The protein localises to the secreted. Functionally, colony queen number, a major feature of social organization, is associated with worker genotype for Gp-9. Colonies are headed by either a single reproductive queen (monogyne form) or multiple queens (polygyne form). Differences in worker Gp-9 genotypes between social forms may cause differences in workers' abilities to recognize queens and regulate their numbers. This is Pheromone-binding protein Gp-9 from Solenopsis daguerrei (Workerless parasitic ant).